The sequence spans 882 residues: Molybdenum cofactor sulfurase (882 aa).

Lysine 265 carries the post-translational modification N6-(pyridoxal phosphate)lysine. Residue cysteine 425 is part of the active site. The segment at 496-546 (GQPLPLATPGEAGAPPEDSEAQNAVPAARARGSSSPQEDTSPHSGVWNNSP) is disordered. Residues 527 to 546 (GSSSPQEDTSPHSGVWNNSP) are compositionally biased toward polar residues. A phosphoserine mark is found at serine 528 and serine 530. The region spanning 707-868 (KQSSDFQRNA…LSVGSQVLPL (162 aa)) is the MOSC domain.

Belongs to the class-V pyridoxal-phosphate-dependent aminotransferase family. MOCOS subfamily. The cofactor is pyridoxal 5'-phosphate. In terms of tissue distribution, ubiquitously expressed.

The catalysed reaction is Mo-molybdopterin + L-cysteine + AH2 = thio-Mo-molybdopterin + L-alanine + A + H2O. It functions in the pathway cofactor biosynthesis; molybdopterin biosynthesis. Its function is as follows. Sulfurates the molybdenum cofactor. Sulfation of molybdenum is essential for xanthine dehydrogenase (XDH) and aldehyde oxidase (ADO) enzymes in which molybdenum cofactor is liganded by 1 oxygen and 1 sulfur atom in active form. This chain is Molybdenum cofactor sulfurase, found in Bos taurus (Bovine).